The following is a 465-amino-acid chain: Na(+)-translocating NADH-quinone reductase subunit A (465 aa).

The protein belongs to the NqrA family. Composed of six subunits; NqrA, NqrB, NqrC, NqrD, NqrE and NqrF.

The catalysed reaction is a ubiquinone + n Na(+)(in) + NADH + H(+) = a ubiquinol + n Na(+)(out) + NAD(+). Its function is as follows. NQR complex catalyzes the reduction of ubiquinone-1 to ubiquinol by two successive reactions, coupled with the transport of Na(+) ions from the cytoplasm to the periplasm. NqrA to NqrE are probably involved in the second step, the conversion of ubisemiquinone to ubiquinol. In Chlamydia trachomatis serovar L2b (strain UCH-1/proctitis), this protein is Na(+)-translocating NADH-quinone reductase subunit A.